Here is a 382-residue protein sequence, read N- to C-terminus: Pectinesterase (382 aa).

Positions 1 to 16 (MKIIVLLLLAVVLASA) are cleaved as a signal peptide. Cysteine 153 and cysteine 164 form a disulfide bridge. N-linked (GlcNAc...) asparagine glycosylation is present at asparagine 179. Glutamine 193 provides a ligand contact to substrate. Aspartate 216 acts as the Proton donor in catalysis. Aspartate 242 serves as the catalytic Nucleophile. Arginine 306 and tryptophan 308 together coordinate substrate. N-linked (GlcNAc...) asparagine glycans are attached at residues asparagine 340 and asparagine 376.

This sequence belongs to the pectinesterase family. As to expression, expressed throughout the midgut with particularly strong expression in the ventriculus.

The protein localises to the secreted. It catalyses the reaction [(1-&gt;4)-alpha-D-galacturonosyl methyl ester](n) + n H2O = [(1-&gt;4)-alpha-D-galacturonosyl](n) + n methanol + n H(+). It functions in the pathway glycan metabolism; pectin degradation; 2-dehydro-3-deoxy-D-gluconate from pectin: step 1/5. Its function is as follows. Pectinesterase which probably plays an important role in the digestion of plant cell walls. This is Pectinesterase from Sitophilus oryzae (Rice weevil).